The primary structure comprises 109 residues: U4-lycotoxin-Ls1b (109 aa).

The N-terminal stretch at 1–22 (MKVLVLFSVLFLTLFSYSSTEA) is a signal peptide. The propeptide occupies 23–44 (IDEFDSDAEDDMLSLMANEQVR). The tract at residues 45–88 (AKACTPRLHDCSHDRHSCCRGELSKDVCYCFYPEGEDKTEVCSC) is knottin domain. 4 disulfide bridges follow: Cys-48-Cys-63, Cys-55-Cys-72, Cys-62-Cys-88, and Cys-74-Cys-86. The tract at residues 89 to 108 (QQPKSHKYIEKVVDKAKTVV) is linear cationic cytotoxin domain.

It belongs to the neurotoxin 19 (CSTX) family. 05 (U4-Lctx) subfamily. In terms of tissue distribution, expressed by the venom gland.

Its subcellular location is the secreted. Functionally, enhances the high-affinity desensitization of human P2RX3 purinoceptors. This Lycosa singoriensis (Wolf spider) protein is U4-lycotoxin-Ls1b.